We begin with the raw amino-acid sequence, 692 residues long: uncharacterized protein (692 aa).

Residues 1–39 (MLRLPSSMPIVSFPANPNLLINPQPSWPSRRGNSAVVVS) constitute a chloroplast transit peptide. One can recognise a Protein kinase domain in the interval 189-523 (EISPEPVAAA…RLESLLSESL (335 aa)). Residues 195 to 203 (VAAASLGQV) and Lys-218 each bind ATP. Asp-343 serves as the catalytic Proton acceptor.

This sequence belongs to the protein kinase superfamily. ADCK protein kinase family.

It localises to the plastid. It is found in the chloroplast. The protein localises to the plastoglobule. This is an uncharacterized protein from Arabidopsis thaliana (Mouse-ear cress).